We begin with the raw amino-acid sequence, 155 residues long: Small ribosomal subunit protein uS7c (155 aa).

It belongs to the universal ribosomal protein uS7 family. In terms of assembly, part of the 30S ribosomal subunit.

The protein localises to the plastid. It is found in the chloroplast. Functionally, one of the primary rRNA binding proteins, it binds directly to 16S rRNA where it nucleates assembly of the head domain of the 30S subunit. The protein is Small ribosomal subunit protein uS7c (rps7) of Sagittaria latifolia (Broadleaf arrowhead).